A 262-amino-acid chain; its full sequence is Global transcriptional regulator CodY (262 aa).

The segment at Met1 to Ser159 is GAF domain. A DNA-binding region (H-T-H motif) is located at residues Ala207–Arg226.

It belongs to the CodY family.

It localises to the cytoplasm. In terms of biological role, DNA-binding global transcriptional regulator which is involved in the adaptive response to starvation and acts by directly or indirectly controlling the expression of numerous genes in response to nutrient availability. During rapid exponential growth, CodY is highly active and represses genes whose products allow adaptation to nutrient depletion. This is Global transcriptional regulator CodY from Lactococcus lactis subsp. lactis (strain IL1403) (Streptococcus lactis).